Here is a 432-residue protein sequence, read N- to C-terminus: Enolase (432 aa).

Q163 contacts (2R)-2-phosphoglycerate. E205 functions as the Proton donor in the catalytic mechanism. 3 residues coordinate Mg(2+): D242, E285, and D312. 4 residues coordinate (2R)-2-phosphoglycerate: K337, R366, S367, and K388. K337 functions as the Proton acceptor in the catalytic mechanism.

Belongs to the enolase family. The cofactor is Mg(2+).

The protein localises to the cytoplasm. The protein resides in the secreted. It localises to the cell surface. The enzyme catalyses (2R)-2-phosphoglycerate = phosphoenolpyruvate + H2O. It functions in the pathway carbohydrate degradation; glycolysis; pyruvate from D-glyceraldehyde 3-phosphate: step 4/5. Functionally, catalyzes the reversible conversion of 2-phosphoglycerate (2-PG) into phosphoenolpyruvate (PEP). It is essential for the degradation of carbohydrates via glycolysis. This chain is Enolase, found in Bifidobacterium longum subsp. infantis (strain ATCC 15697 / DSM 20088 / JCM 1222 / NCTC 11817 / S12).